Here is a 262-residue protein sequence, read N- to C-terminus: Hydroxyethylthiazole kinase (262 aa).

Met-50 serves as a coordination point for substrate. ATP-binding residues include Arg-125 and Thr-171. Gly-198 is a substrate binding site.

The protein belongs to the Thz kinase family. The cofactor is Mg(2+).

The catalysed reaction is 5-(2-hydroxyethyl)-4-methylthiazole + ATP = 4-methyl-5-(2-phosphooxyethyl)-thiazole + ADP + H(+). It functions in the pathway cofactor biosynthesis; thiamine diphosphate biosynthesis; 4-methyl-5-(2-phosphoethyl)-thiazole from 5-(2-hydroxyethyl)-4-methylthiazole: step 1/1. Its function is as follows. Catalyzes the phosphorylation of the hydroxyl group of 4-methyl-5-beta-hydroxyethylthiazole (THZ). This chain is Hydroxyethylthiazole kinase, found in Shigella boydii serotype 18 (strain CDC 3083-94 / BS512).